The following is a 90-amino-acid chain: Probable Fe(2+)-trafficking protein (90 aa).

It belongs to the Fe(2+)-trafficking protein family.

In terms of biological role, could be a mediator in iron transactions between iron acquisition and iron-requiring processes, such as synthesis and/or repair of Fe-S clusters in biosynthetic enzymes. The polypeptide is Probable Fe(2+)-trafficking protein (Xylella fastidiosa (strain M23)).